A 445-amino-acid chain; its full sequence is 23S rRNA (uracil(1939)-C(5))-methyltransferase RlmD (445 aa).

Residues 6–64 enclose the TRAM domain; sequence RRLPREPFEIAITGLSHEGRGIAHHDERTLFVHGALPGERVRAVYTKRRRSVAEARVVE. The [4Fe-4S] cluster site is built by cysteine 77, cysteine 83, cysteine 86, and cysteine 165. The S-adenosyl-L-methionine site is built by glutamine 274, phenylalanine 303, asparagine 308, glutamate 324, aspartate 351, and aspartate 372. The active-site Nucleophile is cysteine 398.

It belongs to the class I-like SAM-binding methyltransferase superfamily. RNA M5U methyltransferase family. RlmD subfamily.

It catalyses the reaction uridine(1939) in 23S rRNA + S-adenosyl-L-methionine = 5-methyluridine(1939) in 23S rRNA + S-adenosyl-L-homocysteine + H(+). Catalyzes the formation of 5-methyl-uridine at position 1939 (m5U1939) in 23S rRNA. The sequence is that of 23S rRNA (uracil(1939)-C(5))-methyltransferase RlmD from Alkalilimnicola ehrlichii (strain ATCC BAA-1101 / DSM 17681 / MLHE-1).